The following is a 249-amino-acid chain: Protein ZPS1 (249 aa).

The first 20 residues, 1–20, serve as a signal peptide directing secretion; the sequence is MKFSSGKSIIFATIASLALS. N-linked (GlcNAc...) asparagine glycans are attached at residues N28, N57, N98, and N217.

This sequence belongs to the ZPS1 family.

The protein is Protein ZPS1 (ZPS1) of Saccharomyces cerevisiae (strain ATCC 204508 / S288c) (Baker's yeast).